The primary structure comprises 186 residues: Small ribosomal subunit protein uS5 (186 aa).

Residues Phe20 to Val83 enclose the S5 DRBM domain.

The protein belongs to the universal ribosomal protein uS5 family. In terms of assembly, part of the 30S ribosomal subunit. Contacts proteins S4 and S8.

Functionally, with S4 and S12 plays an important role in translational accuracy. Located at the back of the 30S subunit body where it stabilizes the conformation of the head with respect to the body. This chain is Small ribosomal subunit protein uS5, found in Brucella ovis (strain ATCC 25840 / 63/290 / NCTC 10512).